A 334-amino-acid polypeptide reads, in one-letter code: Zinc finger Ran-binding domain-containing protein 2 (334 aa).

2 consecutive RanBP2-type zinc fingers follow at residues Ser9–Thr40 and Ser65–Ala94. Positions Arg117–Lys334 are disordered. Residues Asp150 to Gly163 show a composition bias toward acidic residues. Residues Lys196 to His212 are compositionally biased toward basic residues. Low complexity-rich tracts occupy residues Ser213 to Ser224 and Ser258 to Pro285. A compositionally biased stretch (basic residues) spans Arg302–Ser318. A compositionally biased stretch (low complexity) spans Ser319–Lys334.

It belongs to the ZRANB2 family.

The protein resides in the nucleus. In terms of biological role, may regulate alternative splicing by interfering with constitutive 5'-splice site selection. This chain is Zinc finger Ran-binding domain-containing protein 2, found in Gallus gallus (Chicken).